The primary structure comprises 122 residues: Large ribosomal subunit protein bL19 (122 aa).

It belongs to the bacterial ribosomal protein bL19 family.

Functionally, this protein is located at the 30S-50S ribosomal subunit interface and may play a role in the structure and function of the aminoacyl-tRNA binding site. This Prosthecochloris aestuarii (strain DSM 271 / SK 413) protein is Large ribosomal subunit protein bL19.